A 66-amino-acid chain; its full sequence is Large ribosomal subunit protein bL33c (66 aa).

The protein belongs to the bacterial ribosomal protein bL33 family.

It is found in the plastid. It localises to the chloroplast. The chain is Large ribosomal subunit protein bL33c from Glycine max (Soybean).